The chain runs to 222 residues: Glutathione-specific gamma-glutamylcyclotransferase 1 (222 aa).

A disordered region spans residues 1-25; it reads MKQESAAQSTPPPSLSPAPSAQPSW. 35–40 contacts substrate; it reads IFGYGS. The Proton acceptor role is filled by glutamate 115.

It belongs to the gamma-glutamylcyclotransferase family. ChaC subfamily. Interacts with NOTCH1 (via extracellular region).

It is found in the cytoplasm. Its subcellular location is the cytosol. The protein localises to the golgi apparatus. The protein resides in the trans-Golgi network. It carries out the reaction glutathione = L-cysteinylglycine + 5-oxo-L-proline. Its function is as follows. Catalyzes the cleavage of glutathione into 5-oxo-L-proline and a Cys-Gly dipeptide. Acts specifically on glutathione, but not on other gamma-glutamyl peptides. Glutathione depletion is an important factor for apoptosis initiation and execution. Acts as a pro-apoptotic component of the unfolded protein response pathway by mediating the pro-apoptotic effects of the ATF4-ATF3-DDIT3/CHOP cascade. Negative regulator of Notch signaling pathway involved in embryonic neurogenesis: acts by inhibiting Notch cleavage by furin, maintaining Notch in an immature inactive form, thereby promoting neurogenesis in embryos. This is Glutathione-specific gamma-glutamylcyclotransferase 1 from Rattus norvegicus (Rat).